A 391-amino-acid polypeptide reads, in one-letter code: Nucleosome assembly protein 1-like 1 (391 aa).

Basic and acidic residues predominate over residues 1–10 (MADIDNKEQS). The disordered stretch occupies residues 1-32 (MADIDNKEQSELDQDLDDVEEVEEEETGEETK). A2 carries the N-acetylalanine modification. A Phosphoserine modification is found at S10. Over residues 11-28 (ELDQDLDDVEEVEEEETG) the composition is skewed to acidic residues. Phosphothreonine occurs at positions 62 and 64. Residue S69 is modified to Phosphoserine. Residue K116 is modified to N6-acetyllysine. Positions 125–150 (YEPTEEECEWKPDEEDEISEELKEKA) match the NAP1L motif motif. The segment covering 132 to 143 (CEWKPDEEDEIS) has biased composition (acidic residues). The disordered stretch occupies residues 132–163 (CEWKPDEEDEISEELKEKAKVEDEKKDEEKED). At S143 the chain carries Phosphoserine. The segment covering 144-163 (EELKEKAKVEDEKKDEEKED) has biased composition (basic and acidic residues). Residues 273-279 (IKKKQKH) carry the Nuclear localization signal motif. The segment at 345-391 (EAIEDDDDDYDEEGEEADEEGEEEGDEENDPDYDPKKDQNPAECKQQ) is disordered. Acidic residues predominate over residues 346–376 (AIEDDDDDYDEEGEEADEEGEEEGDEENDPD). Residues E359 and E360 each carry the 5-glutamyl polyglycine modification. Over residues 377–391 (YDPKKDQNPAECKQQ) the composition is skewed to basic and acidic residues. Cysteine methyl ester is present on C388. C388 is lipidated: S-farnesyl cysteine. A propeptide spans 389–391 (KQQ) (removed in mature form).

Belongs to the nucleosome assembly protein (NAP) family. As to quaternary structure, homodimer. The dimer binds strongly and sequentially to single and double H2A-H2B heterodimers. Interacts with ERCC6; this interaction increases ERCC6 processivity. Interacts with RAD54. Interacts with SETD1A. Polyglycylated by TTLL10 on glutamate residues, resulting in polyglycine chains on the gamma-carboxyl group. Both polyglutamylation and polyglycylation modifications can coexist on the same protein on adjacent residues, and lowering polyglycylation levels increases polyglutamylation, and reciprocally. In terms of processing, polyglutamylated by TTLL4 on glutamate residues, resulting in polyglutamate chains on the gamma-carboxyl group. Both polyglutamylation and polyglycylation modifications can coexist on the same protein on adjacent residues, and lowering polyglycylation levels increases polyglutamylation, and reciprocally.

It is found in the nucleus. The protein resides in the melanosome. The protein localises to the cytoplasm. In terms of biological role, histone chaperone that plays a role in the nuclear import of H2A-H2B and nucleosome assembly. Also participates in several important DNA repair mechanisms: greatly enhances ERCC6-mediated chromatin remodeling which is essential for transcription-coupled nucleotide excision DNA repair. Also stimulates homologous recombination (HR) by RAD51 and RAD54 which is essential in mitotic DNA double strand break (DSB) repair. Plays a key role in the regulation of embryonic neurogenesis. Promotes the proliferation of neural progenitors and inhibits neuronal differentiation during cortical development. Regulates neurogenesis via the modulation of RASSF10; regulates RASSF10 expression by promoting SETD1A-mediated H3K4 methylation at the RASSF10 promoter. In Bos taurus (Bovine), this protein is Nucleosome assembly protein 1-like 1 (NAP1L1).